We begin with the raw amino-acid sequence, 227 residues long: Uracil-DNA glycosylase (227 aa).

Residue aspartate 64 is the Proton acceptor of the active site.

Belongs to the uracil-DNA glycosylase (UDG) superfamily. UNG family.

It localises to the cytoplasm. The catalysed reaction is Hydrolyzes single-stranded DNA or mismatched double-stranded DNA and polynucleotides, releasing free uracil.. In terms of biological role, excises uracil residues from the DNA which can arise as a result of misincorporation of dUMP residues by DNA polymerase or due to deamination of cytosine. The sequence is that of Uracil-DNA glycosylase from Sodalis glossinidius (strain morsitans).